A 425-amino-acid polypeptide reads, in one-letter code: Kynurenine/alpha-aminoadipate aminotransferase, mitochondrial (425 aa).

Residues 1–29 constitute a mitochondrion transit peptide; the sequence is MNYSRFLTATSLARKPSPIRTTADILSKA. Arginine 20 serves as a coordination point for substrate. Serine 40 is subject to Phosphoserine. The residue at position 69 (lysine 69) is an N6-acetyllysine. Substrate is bound at residue tyrosine 74. Lysine 172 is modified (N6-succinyllysine). Lysine 179 bears the N6-acetyllysine mark. Residue asparagine 202 coordinates substrate. Residue lysine 263 is modified to N6-(pyridoxal phosphate)lysine; alternate. N6-acetyllysine; alternate is present on residues lysine 263 and lysine 339. 2 positions are modified to N6-succinyllysine; alternate: lysine 263 and lysine 339. An N6-acetyllysine modification is found at lysine 351. Lysine 367 carries the N6-acetyllysine; alternate modification. An N6-succinyllysine; alternate modification is found at lysine 367. A substrate-binding site is contributed by arginine 399. Lysine 422 carries the N6-acetyllysine modification.

This sequence belongs to the class-I pyridoxal-phosphate-dependent aminotransferase family. In terms of assembly, homodimer. The cofactor is pyridoxal 5'-phosphate. Expressed mainly in kidney and to a lesser amount in liver and brain.

It is found in the mitochondrion. It carries out the reaction L-kynurenine + 2-oxoglutarate = kynurenate + L-glutamate + H2O. It catalyses the reaction L-2-aminoadipate + 2-oxoglutarate = 2-oxoadipate + L-glutamate. The enzyme catalyses glycine + 2-oxoglutarate = glyoxylate + L-glutamate. The catalysed reaction is L-kynurenine + glyoxylate = kynurenate + glycine + H2O. It carries out the reaction 3-hydroxy-L-kynurenine + glyoxylate = xanthurenate + glycine + H2O. It catalyses the reaction 2-oxohexanoate + L-kynurenine = L-2-aminohexanoate + kynurenate + H2O. The enzyme catalyses 3-phenylpyruvate + L-kynurenine = kynurenate + L-phenylalanine + H2O. The catalysed reaction is 4-methylsulfanyl-2-oxobutanoate + L-kynurenine = kynurenate + L-methionine + H2O. It carries out the reaction 2-oxo-3-sulfanylpropanoate + L-kynurenine = kynurenate + L-cysteine + H2O. It catalyses the reaction indole-3-pyruvate + L-kynurenine = kynurenate + L-tryptophan + H2O. The enzyme catalyses 2-oxopentanoate + L-kynurenine = L-2-aminopentanoate + kynurenate + H2O. The catalysed reaction is 4-methyl-2-oxopentanoate + L-kynurenine = kynurenate + L-leucine + H2O. It carries out the reaction glyoxylate + L-methionine = 4-methylsulfanyl-2-oxobutanoate + glycine. It catalyses the reaction L-2-aminoadipate + glyoxylate = 2-oxoadipate + glycine. The enzyme catalyses L-tyrosine + glyoxylate = 3-(4-hydroxyphenyl)pyruvate + glycine. The catalysed reaction is glyoxylate + L-phenylalanine = 3-phenylpyruvate + glycine. It carries out the reaction L-tryptophan + glyoxylate = indole-3-pyruvate + glycine. It catalyses the reaction L-leucine + glyoxylate = 4-methyl-2-oxopentanoate + glycine. The enzyme catalyses 2-oxobutanoate + L-kynurenine = (2S)-2-aminobutanoate + kynurenate + H2O. The catalysed reaction is 2-oxoadipate + L-kynurenine = L-2-aminoadipate + kynurenate + H2O. Its pathway is amino-acid degradation; L-lysine degradation via saccharopine pathway; glutaryl-CoA from L-lysine: step 4/6. Its function is as follows. Transaminase with broad substrate specificity. Has transaminase activity towards aminoadipate, kynurenine, methionine and glutamate. Shows activity also towards tryptophan, aspartate and hydroxykynurenine. Accepts a variety of oxo-acids as amino-group acceptors, with a preference for 2-oxoglutarate, 2-oxocaproic acid, phenylpyruvate and alpha-oxo-gamma-methiol butyric acid. Can also use glyoxylate as amino-group acceptor (in vitro). This is Kynurenine/alpha-aminoadipate aminotransferase, mitochondrial from Mus musculus (Mouse).